Here is a 92-residue protein sequence, read N- to C-terminus: Acylphosphatase (92 aa).

The Acylphosphatase-like domain maps to 5 to 92 (ATAAYVYGVV…TDYKGFTIRY (88 aa)). Catalysis depends on residues arginine 20 and asparagine 38.

Belongs to the acylphosphatase family.

The enzyme catalyses an acyl phosphate + H2O = a carboxylate + phosphate + H(+). The chain is Acylphosphatase (acyP) from Pectobacterium atrosepticum (strain SCRI 1043 / ATCC BAA-672) (Erwinia carotovora subsp. atroseptica).